The sequence spans 61 residues: Small ribosomal subunit protein uS14 (61 aa).

Cysteine 24, cysteine 27, cysteine 40, and cysteine 43 together coordinate Zn(2+).

It belongs to the universal ribosomal protein uS14 family. Zinc-binding uS14 subfamily. Part of the 30S ribosomal subunit. Contacts proteins S3 and S10. Zn(2+) is required as a cofactor.

Binds 16S rRNA, required for the assembly of 30S particles and may also be responsible for determining the conformation of the 16S rRNA at the A site. This chain is Small ribosomal subunit protein uS14, found in Geobacter metallireducens (strain ATCC 53774 / DSM 7210 / GS-15).